We begin with the raw amino-acid sequence, 192 residues long: NADH-quinone oxidoreductase subunit B (192 aa).

[4Fe-4S] cluster is bound by residues Cys71, Cys72, Cys136, and Cys166.

Belongs to the complex I 20 kDa subunit family. In terms of assembly, NDH-1 is composed of 14 different subunits. Subunits NuoB, C, D, E, F, and G constitute the peripheral sector of the complex. It depends on [4Fe-4S] cluster as a cofactor.

It localises to the cell inner membrane. The catalysed reaction is a quinone + NADH + 5 H(+)(in) = a quinol + NAD(+) + 4 H(+)(out). Its function is as follows. NDH-1 shuttles electrons from NADH, via FMN and iron-sulfur (Fe-S) centers, to quinones in the respiratory chain. The immediate electron acceptor for the enzyme in this species is believed to be ubiquinone. Couples the redox reaction to proton translocation (for every two electrons transferred, four hydrogen ions are translocated across the cytoplasmic membrane), and thus conserves the redox energy in a proton gradient. The sequence is that of NADH-quinone oxidoreductase subunit B from Sinorhizobium medicae (strain WSM419) (Ensifer medicae).